The following is a 212-amino-acid chain: Vesicle transport protein SFT2C (212 aa).

At 1 to 78 (MADLHRQLQD…TRGQRLVAGG (78 aa)) the chain is on the cytoplasmic side. The chain crosses the membrane as a helical span at residues 79-99 (LCLLLAALCFGLAALYAPVLL). Residues 100–104 (LRARK) are Lumenal-facing. The helical transmembrane segment at 105-125 (FALLWSLGSVLAWASAALLRG) threads the bilayer. Over 126–142 (GPACGRLLRGEETPSRS) the chain is Cytoplasmic. Residues 143 to 165 (TLGYAAALGATLYAALVLRSTVL) form a helical membrane-spanning segment. The Lumenal segment spans residues 166–174 (TALGACAQV). Residues 175–197 (AALLYALIGLLPWGGVTALRLAL) traverse the membrane as a helical segment. Topologically, residues 198–212 (GRLNRGTGLANALPV) are cytoplasmic.

Belongs to the SFT2 family.

It is found in the membrane. Functionally, may be involved in fusion of retrograde transport vesicles derived from an endocytic compartment with the Golgi complex. The chain is Vesicle transport protein SFT2C from Mus musculus (Mouse).